Consider the following 580-residue polypeptide: Arginine--tRNA ligase (580 aa).

The 'HIGH' region motif lies at 127–137; it reads PNTHKELHVGH.

It belongs to the class-I aminoacyl-tRNA synthetase family. Monomer.

The protein localises to the cytoplasm. It catalyses the reaction tRNA(Arg) + L-arginine + ATP = L-arginyl-tRNA(Arg) + AMP + diphosphate. In Bdellovibrio bacteriovorus (strain ATCC 15356 / DSM 50701 / NCIMB 9529 / HD100), this protein is Arginine--tRNA ligase.